The chain runs to 291 residues: ATP synthase gamma chain (291 aa).

This sequence belongs to the ATPase gamma chain family. As to quaternary structure, F-type ATPases have 2 components, CF(1) - the catalytic core - and CF(0) - the membrane proton channel. CF(1) has five subunits: alpha(3), beta(3), gamma(1), delta(1), epsilon(1). CF(0) has three main subunits: a, b and c.

It localises to the cell inner membrane. Produces ATP from ADP in the presence of a proton gradient across the membrane. The gamma chain is believed to be important in regulating ATPase activity and the flow of protons through the CF(0) complex. In Burkholderia cenocepacia (strain ATCC BAA-245 / DSM 16553 / LMG 16656 / NCTC 13227 / J2315 / CF5610) (Burkholderia cepacia (strain J2315)), this protein is ATP synthase gamma chain.